Reading from the N-terminus, the 485-residue chain is Probable RNA-binding protein 46 (485 aa).

3 consecutive RRM domains span residues 61–139 (CEVF…VSLD), 141–223 (CRLF…WADP), and 236–308 (KVLY…LAKP).

Interacts with YTHDC2, MEIOC, MOV10, CNOT6L, DDX4, UPF1 and PABPC1.

It localises to the cytoplasm. Its function is as follows. Essential for male and female fertility, playing a crucial role in regulating germ cell development by ensuring the proper progression of meiosis prophase I. Regulates mitotic-to-meiotic transition in spermatogenesis by forming a complex with MEIOC and YTHDC2 which recognizes and down-regulates mitotic transcripts for a successful meiotic entry. Required for normal synaptonemal complex formation during meiosis, binding meiotic cohesin subunit mRNAs containing GCCUAU/GUUCGA motifs in their 3'UTRs regions and positively regulating their translation. Required for spermatogonial differentiation in both developing and adult testis. In Macaca fascicularis (Crab-eating macaque), this protein is Probable RNA-binding protein 46 (RBM46).